The primary structure comprises 505 residues: Deoxyguanosinetriphosphate triphosphohydrolase (505 aa).

An HD domain is found at arginine 66–cysteine 273.

The protein belongs to the dGTPase family. Type 1 subfamily. Homotetramer. It depends on Mg(2+) as a cofactor.

It catalyses the reaction dGTP + H2O = 2'-deoxyguanosine + triphosphate + H(+). Its function is as follows. dGTPase preferentially hydrolyzes dGTP over the other canonical NTPs. The sequence is that of Deoxyguanosinetriphosphate triphosphohydrolase from Escherichia coli O7:K1 (strain IAI39 / ExPEC).